Reading from the N-terminus, the 228-residue chain is MILIEHILGNVKKDPVWQAKLKNATFDLLVLDQREAQKSRCRKSSTQGLDLGISLDRHVVLADGDVLAWDEKTNVAVVVQINLRDVMVIDLSELKTRSPDELIKTCFELGHALGNQHWKAVTKNNEVYVPLTVATTMMDSVMRTHGFQHLPFRFVKGAEILPRLSNSEARLLFGGAEDTDTHVHVASPLDEPHGSGLHIHGIHSHGDGHSHSHDDHDHDHNHDHDHKH.

Positions 193-228 (HGSGLHIHGIHSHGDGHSHSHDDHDHDHNHDHDHKH) are disordered. Residues 204–228 (SHGDGHSHSHDDHDHDHNHDHDHKH) are compositionally biased toward basic and acidic residues.

The protein belongs to the UreE family.

Its subcellular location is the cytoplasm. Its function is as follows. Involved in urease metallocenter assembly. Binds nickel. Probably functions as a nickel donor during metallocenter assembly. The chain is Urease accessory protein UreE from Yersinia rohdei.